The chain runs to 92 residues: Small ribosomal subunit protein uS19 (92 aa).

The protein belongs to the universal ribosomal protein uS19 family.

Protein S19 forms a complex with S13 that binds strongly to the 16S ribosomal RNA. This Rhodopseudomonas palustris (strain HaA2) protein is Small ribosomal subunit protein uS19.